A 215-amino-acid chain; its full sequence is 3-demethoxyubiquinol 3-hydroxylase (215 aa).

Residues glutamate 64, glutamate 94, histidine 97, glutamate 146, glutamate 178, and histidine 181 each coordinate Fe cation.

This sequence belongs to the COQ7 family. The cofactor is Fe cation.

It is found in the cell membrane. It carries out the reaction a 5-methoxy-2-methyl-3-(all-trans-polyprenyl)benzene-1,4-diol + AH2 + O2 = a 3-demethylubiquinol + A + H2O. It participates in cofactor biosynthesis; ubiquinone biosynthesis. Functionally, catalyzes the hydroxylation of 2-nonaprenyl-3-methyl-6-methoxy-1,4-benzoquinol during ubiquinone biosynthesis. The chain is 3-demethoxyubiquinol 3-hydroxylase from Azotobacter vinelandii (strain DJ / ATCC BAA-1303).